Here is a 181-residue protein sequence, read N- to C-terminus: Cytochrome c-type biogenesis protein CcmE (181 aa).

Residues 1 to 8 (MNPRRKSR) are Cytoplasmic-facing. The helical; Signal-anchor for type II membrane protein transmembrane segment at 9–29 (LKVVVSIIFGVAVAAGLTLYA) threads the bilayer. The Periplasmic portion of the chain corresponds to 30–181 (LSQNIDLFYT…TLKTLQGEAN (152 aa)). Heme is bound by residues His131 and Tyr135. 2 stretches are compositionally biased toward basic and acidic residues: residues 135–148 (YMPPELGDKLKEQH) and 156–166 (ADLKGTSARDK). The segment at 135 to 166 (YMPPELGDKLKEQHGAAGISEADLKGTSARDK) is disordered.

The protein belongs to the CcmE/CycJ family.

The protein resides in the cell inner membrane. Functionally, heme chaperone required for the biogenesis of c-type cytochromes. Transiently binds heme delivered by CcmC and transfers the heme to apo-cytochromes in a process facilitated by CcmF and CcmH. The chain is Cytochrome c-type biogenesis protein CcmE from Actinobacillus pleuropneumoniae serotype 7 (strain AP76).